The sequence spans 549 residues: Ankyrin repeat domain-containing protein SOWAHA (549 aa).

An N-terminal signal peptide occupies residues 1-17 (MALAAAAAAAAAGVSQA). Disordered regions lie at residues 82–219 (KPRP…PCML) and 235–256 (EEPG…PLLL). Residues 203 to 216 (PGPGAAKGPPQQKP) are compositionally biased toward low complexity. The span at 235–248 (EEPGLRRQLSEEPS) shows a compositional bias: basic and acidic residues. Residue Ser260 is modified to Phosphoserine. ANK repeat units lie at residues 345 to 374 (SGFT…RSGA) and 384 to 414 (GGYT…QVHV). The tract at residues 513–549 (PRKKTKIRGGLPAFSEISRRPTPGPLAGLVPSLPPTT) is disordered.

The protein belongs to the SOWAH family.

The chain is Ankyrin repeat domain-containing protein SOWAHA (SOWAHA) from Homo sapiens (Human).